We begin with the raw amino-acid sequence, 363 residues long: Peroxisomal (S)-2-hydroxyacid oxidase GLO4 (363 aa).

Positions 1 to 357 (MDQIVNVDEF…TRNHVRTENE (357 aa)) constitute an FMN hydroxy acid dehydrogenase domain. FMN contacts are provided by residues 78-80 (PTA), Ser107, 128-130 (QIY), and Thr156. Tyr130 lines the a 2-oxocarboxylate pocket. Arg165 contributes to the a 2-oxocarboxylate binding site. FMN is bound by residues Lys228 and Ser250. His252 serves as the catalytic Proton acceptor. Residue Arg255 participates in a 2-oxocarboxylate binding. FMN is bound by residues 283 to 287 (DGGVR) and 306 to 307 (GR). The Microbody targeting signal signature appears at 361–363 (SML).

It belongs to the FMN-dependent alpha-hydroxy acid dehydrogenase family. In terms of assembly, homotetramer. The cofactor is FMN.

The protein resides in the peroxisome. It carries out the reaction a (2S)-2-hydroxycarboxylate + O2 = a 2-oxocarboxylate + H2O2. It catalyses the reaction 2-hydroxydodecanoate + O2 = 2-oxododecanoate + H2O2. The enzyme catalyses 2-hydroxyhexanoate + O2 = 2-oxohexanoate + H2O2. The catalysed reaction is 2-hydroxyoctanoate + O2 = 2-oxooctanoate + H2O2. It carries out the reaction (S)-lactate + O2 = pyruvate + H2O2. It functions in the pathway lipid metabolism; fatty acid metabolism. Functionally, oxidase that catalyzes the oxidation of a broad range of 2-hydroxyacids to the corresponding 2-oxoacids, with a reduction of O2 to H2O2. Displays the highest activity with the long-chain fatty acid 2-hydroxydodecanoate and has intermediate activity with 2-hydroxyhexanoate, 2-hydroxyoctanote, and the short-chain hydroxyacid (S)-lactate (L-lactate). With much lower activity, it can also use glycolate, leucic acid, valic acid, and isoleucic acid as substrates in vitro. Cannot use 2-hydroxyhexadecanoate or D-lactate as substrates. May be involved in a general medium- and long-chain fatty acid catabolic pathway such as alpha-oxidation. The polypeptide is Peroxisomal (S)-2-hydroxyacid oxidase GLO4 (GLO4) (Arabidopsis thaliana (Mouse-ear cress)).